The primary structure comprises 624 residues: tRNA uridine 5-carboxymethylaminomethyl modification enzyme MnmG (624 aa).

FAD-binding positions include 13–18, valine 125, and serine 180; that span reads GAGHAG. 272–286 serves as a coordination point for NAD(+); that stretch reads GPRYCPSIEDKVVKF. Glutamine 369 is an FAD binding site.

This sequence belongs to the MnmG family. In terms of assembly, homodimer. Heterotetramer of two MnmE and two MnmG subunits. FAD serves as cofactor.

Its subcellular location is the cytoplasm. NAD-binding protein involved in the addition of a carboxymethylaminomethyl (cmnm) group at the wobble position (U34) of certain tRNAs, forming tRNA-cmnm(5)s(2)U34. This chain is tRNA uridine 5-carboxymethylaminomethyl modification enzyme MnmG, found in Thermodesulfovibrio yellowstonii (strain ATCC 51303 / DSM 11347 / YP87).